Here is a 110-residue protein sequence, read N- to C-terminus: Large ribosomal subunit protein uL22 (110 aa).

Belongs to the universal ribosomal protein uL22 family. In terms of assembly, part of the 50S ribosomal subunit.

In terms of biological role, this protein binds specifically to 23S rRNA; its binding is stimulated by other ribosomal proteins, e.g. L4, L17, and L20. It is important during the early stages of 50S assembly. It makes multiple contacts with different domains of the 23S rRNA in the assembled 50S subunit and ribosome. Its function is as follows. The globular domain of the protein is located near the polypeptide exit tunnel on the outside of the subunit, while an extended beta-hairpin is found that lines the wall of the exit tunnel in the center of the 70S ribosome. This Pseudomonas aeruginosa (strain LESB58) protein is Large ribosomal subunit protein uL22.